The following is a 365-amino-acid chain: Green-sensitive opsin P521 (365 aa).

Topologically, residues 1–51 (MTEAWNVAVFAARRSRDDDDTTRGSVFTYTNTNNTRGPFEGPNYHIAPRWV) are extracellular. Asn33 carries N-linked (GlcNAc...) asparagine glycosylation. Residues 52–76 (YNLVSFFMIIVVIASCFTNGLVLVA) form a helical membrane-spanning segment. The Cytoplasmic portion of the chain corresponds to 77 to 88 (TAKFKKLRHPLN). The chain crosses the membrane as a helical span at residues 89-113 (WILVNLAFVDLVETLVASTISVFNQ). The Extracellular segment spans residues 114–128 (IFGYFILGHPLCVIE). A disulfide bridge links Cys125 with Cys202. A helical membrane pass occupies residues 129 to 148 (GYVVSSCGITGLWSLAIISW). Over 149-167 (ERWFVVCKPFGNIKFDSKL) the chain is Cytoplasmic. Residues 168 to 191 (AIIGIVFSWVWAWGWSAPPIFGWS) traverse the membrane as a helical segment. Over 192–217 (RYWPHGLKTSCGPDVFSGSVELGCQS) the chain is Extracellular. Residues 218–245 (FMLTLMITCCFLPLFIIIVCYLQVWMAI) form a helical membrane-spanning segment. Residues 246-267 (RAVAAQQKESESTQKAEREVSR) lie on the Cytoplasmic side of the membrane. The chain crosses the membrane as a helical span at residues 268–291 (MVVVMIVAFCICWGPYASFVSFAA). Residues 292–299 (ANPGYAFH) are Extracellular-facing. The helical transmembrane segment at 300-324 (PLAAALPAYFAKSATIYNPVIYVFM) threads the bilayer. Position 311 is an N6-(retinylidene)lysine (Lys311). The Cytoplasmic portion of the chain corresponds to 325–365 (NRQFRNCIMQLFGKKVDDGSEASTTSRTEVSSVSNSSVAPA). A disordered region spans residues 342-365 (DGSEASTTSRTEVSSVSNSSVAPA). Over residues 345-365 (EASTTSRTEVSSVSNSSVAPA) the composition is skewed to low complexity.

It belongs to the G-protein coupled receptor 1 family. Opsin subfamily. Post-translationally, phosphorylated on some or all of the serine and threonine residues present in the C-terminal region. In this lizard the color pigments are found in the rod-shaped photoreceptor cells which have been derived from ancestral cone-like photoreceptors.

The protein resides in the membrane. Visual pigments are the light-absorbing molecules that mediate vision. They consist of an apoprotein, opsin, covalently linked to cis-retinal. The chain is Green-sensitive opsin P521 from Gekko gecko (Tokay gecko).